We begin with the raw amino-acid sequence, 177 residues long: Adenine phosphoribosyltransferase (177 aa).

Belongs to the purine/pyrimidine phosphoribosyltransferase family. In terms of assembly, homodimer.

The protein resides in the cytoplasm. It catalyses the reaction AMP + diphosphate = 5-phospho-alpha-D-ribose 1-diphosphate + adenine. It functions in the pathway purine metabolism; AMP biosynthesis via salvage pathway; AMP from adenine: step 1/1. Its function is as follows. Catalyzes a salvage reaction resulting in the formation of AMP, that is energically less costly than de novo synthesis. The sequence is that of Adenine phosphoribosyltransferase from Synechococcus sp. (strain RCC307).